Here is a 399-residue protein sequence, read N- to C-terminus: Secreted RxLR effector protein 36 (399 aa).

The first 21 residues, 1-21 (MRGTIYVAIAILVAASSRSSA), serve as a signal peptide directing secretion. Residues 50–71 (RILRESRGSNDKLAVGAGDEER) carry the RxLR-dEER motif. N75 is a glycosylation site (N-linked (GlcNAc...) asparagine). The interval 126 to 145 (IDPTPSNLGGQALHAPPNPD) is disordered.

This sequence belongs to the RxLR effector family.

Its subcellular location is the secreted. The protein localises to the host nucleus. Its function is as follows. Secreted effector that completely suppresses the host cell death induced by cell death-inducing proteins. The chain is Secreted RxLR effector protein 36 from Plasmopara viticola (Downy mildew of grapevine).